A 468-amino-acid polypeptide reads, in one-letter code: Putative FBD-associated F-box protein At5g22720 (468 aa).

The F-box domain maps to 22-68 (EDLISQLPDSLITQILFYLQTKKAVTTSVLSKRWRSLWLSTPGLVLI). The FBD domain occupies 375 to 433 (ELRLSFVPRCLLSSLEFVEIKGCSRSNMERVKYVGEPIETKLARYFVENSTILKKLVLP).

The sequence is that of Putative FBD-associated F-box protein At5g22720 from Arabidopsis thaliana (Mouse-ear cress).